The following is a 157-amino-acid chain: Transcription elongation factor GreA (157 aa).

The stretch at 10–76 (THEGKQKLEQ…TLENMIRNAK (67 aa)) forms a coiled coil.

Belongs to the GreA/GreB family.

Functionally, necessary for efficient RNA polymerase transcription elongation past template-encoded arresting sites. The arresting sites in DNA have the property of trapping a certain fraction of elongating RNA polymerases that pass through, resulting in locked ternary complexes. Cleavage of the nascent transcript by cleavage factors such as GreA or GreB allows the resumption of elongation from the new 3'terminus. GreA releases sequences of 2 to 3 nucleotides. The protein is Transcription elongation factor GreA of Bacillus velezensis (strain DSM 23117 / BGSC 10A6 / LMG 26770 / FZB42) (Bacillus amyloliquefaciens subsp. plantarum).